A 438-amino-acid polypeptide reads, in one-letter code: uncharacterized protein (438 aa).

The 171-residue stretch at Ile23–Ala193 folds into the FAD-binding PCMH-type domain. Residues Val55–Gly59, His60–Ser61, Gln65, Asp117, Thr122, Ser128–Phe132, Ile183, Tyr393, and Ala430–Tyr433 contribute to the FAD site. His60 carries the pros-8alpha-FAD histidine modification.

Belongs to the oxygen-dependent FAD-linked oxidoreductase family. It depends on FAD as a cofactor.

Functionally, the FAS-operon encodes genes involved in cytokinin production and in host plant fasciation (leafy gall). This is an uncharacterized protein from Rhodococcoides fascians (Rhodococcus fascians).